The sequence spans 464 residues: Arylsulfatase (464 aa).

Positions 1-20 are cleaved as a signal peptide; it reads MNKKAMAAAVSMILAGGAHA. Residues aspartate 34, aspartate 35, and serine 72 each coordinate Ca(2+). Serine 72 serves as the catalytic Nucleophile. Residue serine 72 is modified to 3-oxoalanine (Ser). Histidine 134 is an active-site residue. Ca(2+) is bound by residues aspartate 329 and asparagine 330.

It belongs to the sulfatase family. The cofactor is Ca(2+). In terms of processing, the conversion to 3-oxoalanine (also known as C-formylglycine, FGly), of a serine or cysteine residue in prokaryotes and of a cysteine residue in eukaryotes, is critical for catalytic activity.

The protein resides in the periplasm. It catalyses the reaction an aryl sulfate + H2O = a phenol + sulfate + H(+). Plays an important role in the mineralization of sulfates. This chain is Arylsulfatase (atsA), found in Klebsiella aerogenes (Enterobacter aerogenes).